We begin with the raw amino-acid sequence, 366 residues long: MIRTEEMLLNVGPQHPSTHGVFRLVIKIDGEIIKEATPVIGYLHRGTEKIAESLQYTQIIPYTDRMDYLSAMTNNYVLCHAVETMMDLEIPERAEYLRVLAMELGRVASHLVWWGTNLLDIGAVSPFLYAFREREMIINLLSELCGARLTFNYMRVGGVKWDAPDGWIEKVKEFVPYMREQLEGYHDLVSGNEIFLNRVKGVGVYSAEEAISYSLSGANLRCTGVHWDLRKDEPYSIYDRFDFDVPVGSTGDAWDRYVCRMKEIEESLKIIEQAVEQFPKDGAVLAKVPKIIKAPKGEAFVRIESPRGEIGCYIASDGKKEPYRLKFRRPSFYNLQILPKLLKGENIANLITILGGVDIVLGEVDG.

It belongs to the complex I 49 kDa subunit family. In terms of assembly, NDH-1 is composed of 14 different subunits. Subunits NuoB, C, D, E, F, and G constitute the peripheral sector of the complex.

The protein resides in the cell membrane. The enzyme catalyses a quinone + NADH + 5 H(+)(in) = a quinol + NAD(+) + 4 H(+)(out). Functionally, NDH-1 shuttles electrons from NADH, via FMN and iron-sulfur (Fe-S) centers, to quinones in the respiratory chain. The immediate electron acceptor for the enzyme in this species is believed to be a menaquinone. Couples the redox reaction to proton translocation (for every two electrons transferred, four hydrogen ions are translocated across the cytoplasmic membrane), and thus conserves the redox energy in a proton gradient. The sequence is that of NADH-quinone oxidoreductase subunit D from Bacillus mycoides (strain KBAB4) (Bacillus weihenstephanensis).